Consider the following 496-residue polypeptide: Glutamate--tRNA ligase 2 (496 aa).

The 'HIGH' region motif lies at 13–23 (PSPTGRLHVGG). The 'KMSKS' region motif lies at 255 to 259 (KLSKR). Lys258 contacts ATP.

Belongs to the class-I aminoacyl-tRNA synthetase family. Glutamate--tRNA ligase type 1 subfamily. In terms of assembly, monomer.

It is found in the cytoplasm. It catalyses the reaction tRNA(Glu) + L-glutamate + ATP = L-glutamyl-tRNA(Glu) + AMP + diphosphate. Catalyzes the attachment of glutamate to tRNA(Glu) in a two-step reaction: glutamate is first activated by ATP to form Glu-AMP and then transferred to the acceptor end of tRNA(Glu). The chain is Glutamate--tRNA ligase 2 from Rubrobacter xylanophilus (strain DSM 9941 / JCM 11954 / NBRC 16129 / PRD-1).